The following is a 348-amino-acid chain: Phosphoribosylformylglycinamidine cyclo-ligase (348 aa).

It belongs to the AIR synthase family.

The protein localises to the cytoplasm. It catalyses the reaction 2-formamido-N(1)-(5-O-phospho-beta-D-ribosyl)acetamidine + ATP = 5-amino-1-(5-phospho-beta-D-ribosyl)imidazole + ADP + phosphate + H(+). Its pathway is purine metabolism; IMP biosynthesis via de novo pathway; 5-amino-1-(5-phospho-D-ribosyl)imidazole from N(2)-formyl-N(1)-(5-phospho-D-ribosyl)glycinamide: step 2/2. The sequence is that of Phosphoribosylformylglycinamidine cyclo-ligase from Geobacter sp. (strain M21).